A 427-amino-acid chain; its full sequence is Gamma-glutamyl phosphate reductase (427 aa).

This sequence belongs to the gamma-glutamyl phosphate reductase family.

It is found in the cytoplasm. It carries out the reaction L-glutamate 5-semialdehyde + phosphate + NADP(+) = L-glutamyl 5-phosphate + NADPH + H(+). The protein operates within amino-acid biosynthesis; L-proline biosynthesis; L-glutamate 5-semialdehyde from L-glutamate: step 2/2. Its function is as follows. Catalyzes the NADPH-dependent reduction of L-glutamate 5-phosphate into L-glutamate 5-semialdehyde and phosphate. The product spontaneously undergoes cyclization to form 1-pyrroline-5-carboxylate. The protein is Gamma-glutamyl phosphate reductase of Brucella canis (strain ATCC 23365 / NCTC 10854 / RM-666).